A 188-amino-acid polypeptide reads, in one-letter code: Josephin-2 (188 aa).

The Josephin domain maps to 11-188 (PPSVYHERQR…EEAGCWLNTS (178 aa)). Catalysis depends on Cys-24, which acts as the Nucleophile. His-125 serves as the catalytic Proton acceptor.

The protein resides in the cytoplasm. Its subcellular location is the cytosol. The catalysed reaction is Thiol-dependent hydrolysis of ester, thioester, amide, peptide and isopeptide bonds formed by the C-terminal Gly of ubiquitin (a 76-residue protein attached to proteins as an intracellular targeting signal).. Its function is as follows. Cleaves 'Lys-63'-linked poly-ubiquitin chains, and with lesser efficiency 'Lys-48'-linked poly-ubiquitin chains (in vitro). May act as a deubiquitinating enzyme. The sequence is that of Josephin-2 (Josd2) from Mus musculus (Mouse).